Here is a 236-residue protein sequence, read N- to C-terminus: 15,16-dihydrobiliverdin:ferredoxin oxidoreductase (236 aa).

This sequence belongs to the HY2 family.

It catalyses the reaction 15,16-dihydrobiliverdin + oxidized 2[4Fe-4S]-[ferredoxin] = biliverdin IXalpha + reduced 2[4Fe-4S]-[ferredoxin] + 2 H(+). Catalyzes the two-electron reduction of biliverdin IX-alpha at the C15 methine bridge. The protein is 15,16-dihydrobiliverdin:ferredoxin oxidoreductase of Prochlorococcus marinus (strain AS9601).